The primary structure comprises 1001 residues: E3 ubiquitin-protein ligase etc-1 (1001 aa).

One can recognise an IQ domain in the interval 28 to 57 (QEKAARKVQKFWRGHRVQHNQRLLFRAEFD). The stretch at 66-115 (LEETIKMAQLLVNFYETNKDEERLVMTLSELVKLKTSDKEFEKRIRETQR) forms a coiled coil. Residues 658 to 1001 (KVNDLKSMVR…INSGAGFELA (344 aa)) form the HECT domain. C969 serves as the catalytic Glycyl thioester intermediate.

In terms of assembly, interacts with ify-1 and cyb-1.

The enzyme catalyses S-ubiquitinyl-[E2 ubiquitin-conjugating enzyme]-L-cysteine + [acceptor protein]-L-lysine = [E2 ubiquitin-conjugating enzyme]-L-cysteine + N(6)-ubiquitinyl-[acceptor protein]-L-lysine.. It functions in the pathway protein modification; protein ubiquitination. E3 ubiquitin-protein ligase that accepts ubiquitin from E2 ubiquitin-conjugating enzymes, such as ubc-18, in the form of a thioester and then directly transfers the ubiquitin to targeted substrates. Ubiquitinates ify-1 and cyb-1 targeting them for degradation in post-meiotic embryos. The polypeptide is E3 ubiquitin-protein ligase etc-1 (Caenorhabditis elegans).